A 405-amino-acid chain; its full sequence is Imidazolonepropionase (405 aa).

Residues His72 and His74 each coordinate Fe(3+). Positions 72 and 74 each coordinate Zn(2+). 4-imidazolone-5-propanoate contacts are provided by Arg81, Tyr144, and His177. Tyr144 is an N-formimidoyl-L-glutamate binding site. Residue His242 coordinates Fe(3+). Zn(2+) is bound at residue His242. A 4-imidazolone-5-propanoate-binding site is contributed by Gln245. A Fe(3+)-binding site is contributed by Asp317. Asp317 is a binding site for Zn(2+). N-formimidoyl-L-glutamate contacts are provided by Asn319 and Gly321. 4-imidazolone-5-propanoate is bound at residue Thr322.

Belongs to the metallo-dependent hydrolases superfamily. HutI family. Requires Zn(2+) as cofactor. It depends on Fe(3+) as a cofactor.

The protein resides in the cytoplasm. The enzyme catalyses 4-imidazolone-5-propanoate + H2O = N-formimidoyl-L-glutamate. The protein operates within amino-acid degradation; L-histidine degradation into L-glutamate; N-formimidoyl-L-glutamate from L-histidine: step 3/3. Catalyzes the hydrolytic cleavage of the carbon-nitrogen bond in imidazolone-5-propanoate to yield N-formimidoyl-L-glutamate. It is the third step in the universal histidine degradation pathway. This chain is Imidazolonepropionase, found in Erwinia tasmaniensis (strain DSM 17950 / CFBP 7177 / CIP 109463 / NCPPB 4357 / Et1/99).